The chain runs to 1385 residues: Defecation cycle abnormal dec-7 (1385 aa).

Residues 1 to 19 form the signal peptide; the sequence is MWTARHAVALLVVLTYAYS. The N-linked (GlcNAc...) asparagine glycan is linked to asparagine 156. A disordered region spans residues 234-262; it reads SQTNYGAPNYQQAGAQSAANQQFSNPSQY. Residues 242–261 are compositionally biased toward low complexity; sequence NYQQAGAQSAANQQFSNPSQ. Positions 285-450 constitute an NIDO domain; that stretch reads QIYGKRKKRQ…GRWIHRVDEV (166 aa). N-linked (GlcNAc...) asparagine glycans are attached at residues asparagine 313, asparagine 386, asparagine 413, asparagine 458, asparagine 480, asparagine 562, and asparagine 583. The AMOP domain maps to 681 to 840; it reads GRNWPIDMCI…DHCEFYYWRR (160 aa). One can recognise a VWFD domain in the interval 852–1088; that stretch reads AAGYIYGEPH…FWKIDGTNDK (237 aa). Asparagine 909, asparagine 921, asparagine 975, asparagine 1009, and asparagine 1124 each carry an N-linked (GlcNAc...) asparagine glycan. Residues 1179–1238 enclose the Sushi domain; the sequence is ISCGPLLKKEGVVKTPPAANYLDGDKVVFSCKPKYYIHGDIERVCRNGTWSPGWWAWCRD. Cystine bridges form between cysteine 1181–cysteine 1223 and cysteine 1209–cysteine 1236. A glycan (N-linked (GlcNAc...) asparagine) is linked at asparagine 1225. Residues 1251–1271 traverse the membrane as a helical segment; the sequence is LLSIFGISLIFVIFFCILWNI. Positions 1321 to 1385 are disordered; the sequence is MNQPSRPIPS…GNMRFETSAI (65 aa).

In terms of tissue distribution, highly expressed in the intestinal epithelia.

The protein localises to the membrane. It is found in the cell junction. May negatively regulate activity of innexin gap junction protein inx-16, thereby mediating the rhythmic frequency of the defecation motor program. Required for the clustering of inx-16 to the cell-cell junction of the intestinal epithelia. Probably dispensable for intestinal integrity. May be a cytokine receptor. The polypeptide is Defecation cycle abnormal dec-7 (Caenorhabditis elegans).